Here is a 169-residue protein sequence, read N- to C-terminus: Crossover junction endodeoxyribonuclease RuvC (169 aa).

Residues Asp15, Glu75, and Asp147 contribute to the active site. Asp15, Glu75, and Asp147 together coordinate Mg(2+).

The protein belongs to the RuvC family. In terms of assembly, homodimer which binds Holliday junction (HJ) DNA. The HJ becomes 2-fold symmetrical on binding to RuvC with unstacked arms; it has a different conformation from HJ DNA in complex with RuvA. In the full resolvosome a probable DNA-RuvA(4)-RuvB(12)-RuvC(2) complex forms which resolves the HJ. Requires Mg(2+) as cofactor.

The protein resides in the cytoplasm. The enzyme catalyses Endonucleolytic cleavage at a junction such as a reciprocal single-stranded crossover between two homologous DNA duplexes (Holliday junction).. Functionally, the RuvA-RuvB-RuvC complex processes Holliday junction (HJ) DNA during genetic recombination and DNA repair. Endonuclease that resolves HJ intermediates. Cleaves cruciform DNA by making single-stranded nicks across the HJ at symmetrical positions within the homologous arms, yielding a 5'-phosphate and a 3'-hydroxyl group; requires a central core of homology in the junction. The consensus cleavage sequence is 5'-(A/T)TT(C/G)-3'. Cleavage occurs on the 3'-side of the TT dinucleotide at the point of strand exchange. HJ branch migration catalyzed by RuvA-RuvB allows RuvC to scan DNA until it finds its consensus sequence, where it cleaves and resolves the cruciform DNA. The sequence is that of Crossover junction endodeoxyribonuclease RuvC from Caulobacter sp. (strain K31).